Reading from the N-terminus, the 723-residue chain is MFRSHASGNKKQWSKRSSNGSTPAASASGSHAYRQQTLSSFFMGCGKKSAAASKNSTTIIDLESGDEGNRNITAPPRPRLIRNNSSSLFSQSQGSFGDDDPDAEFKKLVDVPRLNSYKKSSRSLSMTSSLHKTASASTTQKTYHFDEDETLREVTSVKSNSRQLSFTSTINIEDSSMKLSTDSERPAKRSKPSMEFQGLKLTVPKKIKPLLRKTVSNMDSMNHRSASSPVVLTMEQERVVNLIVKKRTNVFYTGSAGTGKSVILQTIIRQLSSLYGKESIAITASTGLAAVTIGGSTLHKWSGIGIGNKTIDQLVKKIQSQKDLLAAWRYTKVLIIDEISMVDGNLLDKLEQIARRIRKNDDPFGGIQLVLTGDFFQLPPVAKKDEHNVVKFCFESEMWKRCIQKTILLTKVFRQQDNKLIDILNAIRYGELTVDIAKTIRNLNRDIDYADGIAPTELYATRREVELSNVKKLQSLPGDLYEFKAVDNAPERYQAILDSSLMVEKVVALKEDAQVMMLKNKPDVELVNGSLGKVLFFVTESLVVKMKEIYKIVDDEVVMDMRLVSRVIGNPLLKESKEFRQDLNARPLARLERLKILINYAVKISPHKEKFPYVRWTVGKNKYIHELMVPERFPIDIPRENVGLERTQIPLMLCWALSIHKAQGQTIQRLKVDLRRIFEAGQVYVALSRAVTMDTLQVLNFDPGKIRTNERVKDFYKRLETLK.

Disordered stretches follow at residues 1 to 31 (MFRS…SGSH) and 61 to 101 (DLES…DDDP). Ser-64 carries the post-translational modification Phosphoserine. Low complexity predominate over residues 83–96 (NNSSSLFSQSQGSF). Residue 254 to 261 (GSAGTGKS) coordinates ATP. A DNA-binding region spans residues 682–701 (QVYVALSRAVTMDTLQVLNF).

It belongs to the helicase family. In terms of assembly, interacts with DEF1 and POL30.

The protein localises to the nucleus. It localises to the chromosome. It is found in the telomere. The enzyme catalyses Couples ATP hydrolysis with the unwinding of duplex DNA at the replication fork by translocating in the 5'-3' direction. This creates two antiparallel DNA single strands (ssDNA). The leading ssDNA polymer is the template for DNA polymerase III holoenzyme which synthesizes a continuous strand.. The catalysed reaction is ATP + H2O = ADP + phosphate + H(+). In terms of biological role, 5' to 3' DNA replicative helicase recruited to paused replisomes to promote fork progression throughout nonhistone protein-DNA complexes, naturally occurring impediments that are encountered in each S phase where replication forks pauses. Needed for normal fork progression through over 1000 discrete sites scattered throughout the genome, like rDNA, tRNA genes, centromeres, active replication origins, or transcriptional silencers. Required for timely replication of the telomere and subtelomeric DNA and for wild-type levels of telomeric silencing. Involved in regulation of Ty1 transposition and protects the genome from instability at nascent sites of retrotransposition. Involved in DNA repair during stalled replication fork, regulation of fragile sites expression and essential for genome stability. Also plays a role in mtDNA replication. Has G-quadruplex (G4) unwinding activity and can suppress G4-induced genome instability when PIF1 levels are low. This chain is ATP-dependent DNA helicase RRM3, found in Saccharomyces cerevisiae (strain ATCC 204508 / S288c) (Baker's yeast).